A 100-amino-acid chain; its full sequence is Urease subunit gamma (100 aa).

The protein belongs to the urease gamma subunit family. In terms of assembly, heterotrimer of UreA (gamma), UreB (beta) and UreC (alpha) subunits. Three heterotrimers associate to form the active enzyme.

The protein localises to the cytoplasm. The catalysed reaction is urea + 2 H2O + H(+) = hydrogencarbonate + 2 NH4(+). It participates in nitrogen metabolism; urea degradation; CO(2) and NH(3) from urea (urease route): step 1/1. The chain is Urease subunit gamma from Granulibacter bethesdensis (strain ATCC BAA-1260 / CGDNIH1).